A 377-amino-acid polypeptide reads, in one-letter code: uncharacterized protein (377 aa).

A coiled-coil region spans residues 309-375; that stretch reads NIISVDKIKE…ISNLNKKLKK (67 aa).

This sequence belongs to the mimivirus L5 family.

This is an uncharacterized protein from Acanthamoeba polyphaga (Amoeba).